A 41-amino-acid polypeptide reads, in one-letter code: Pi-stichotoxin-Hcr5c (41 aa).

Cystine bridges form between cysteine 4-cysteine 37, cysteine 6-cysteine 30, and cysteine 20-cysteine 38.

This sequence belongs to the sea anemone type 3 (BDS) potassium channel toxin family.

Its subcellular location is the secreted. It is found in the nematocyst. Its function is as follows. Weakly and reversibly inhibits rat homomeric ASIC1 (isoform ASIC1a) (IC(50)=4.95 uM), and ASIC3 (IC(50)=17 uM). ASIC1a current inhibition and ASIC3 transient current inhibition are not complete, and reach a maximum of 70% inhibition and 80%, respectively. The chain is Pi-stichotoxin-Hcr5c from Radianthus crispa (Leathery sea anemone).